The chain runs to 203 residues: uncharacterized protein (203 aa).

The segment at 1–23 is disordered; the sequence is MGSSFVIDRSSSSPAPPRGPAPK.

This is an uncharacterized protein from Saccharomyces cerevisiae (strain ATCC 204508 / S288c) (Baker's yeast).